Here is a 516-residue protein sequence, read N- to C-terminus: MKILILSFFLILGINLVFCQSSISLSATIYDQSPARNPDFEIPNAPNAVVKNMVLSTLGADKTPTYCCGDNGVYYNGQFDIHSQSTFDSWFHEIEGISYAVPYELVLIESKDEPGIYVYTSSSFFPIDGKGFDNKTLYPDEITYNGHNYHFCMKIHSSFTYHGGEYFTFAGDDDVWVYFDNNLLIDLGGLHTSASETVYLDNLGLTIGQSFPFDFFYCERHTYESNLNIITNLNLTCIEYDACGVCLGKNDTCCFVNKCETINRCLEADCNEGTNFQCDYHIKNCSDGDICSTDGCDIGFGCINLPINCDDGNYCTKDYCDPTYGCLHIETANCTECLETGCITVLPCFPVTCDSLNSSHCVASAMNCSDNDPCTSTECVNGECTYEWICGSEDSSSGVVDSSSGVVDSSSDVIDSSDIIIDSSSDIPIPTLSPSPQPSRFPTDTPTNTPMPPTRPPTPTEDPKIYEDPEDLDKDCLHCKDLGCILTGKSCGYLKNEKYEKSNCKENCCSHTPTCF.

A signal peptide spans 1 to 19; sequence MKILILSFFLILGINLVFC. The PA14 domain occupies 109 to 249; that stretch reads ESKDEPGIYV…YDACGVCLGK (141 aa). N-linked (GlcNAc...) asparagine glycosylation is found at N134, N234, N250, N284, N333, N357, and N367. Residues 418–427 show a composition bias toward low complexity; the sequence is DIIIDSSSDI. Positions 418 to 465 are disordered; sequence DIIIDSSSDIPIPTLSPSPQPSRFPTDTPTNTPMPPTRPPTPTEDPKI. The segment covering 449 to 460 has biased composition (pro residues); the sequence is TPMPPTRPPTPT.

This sequence belongs to the prespore-cell-inducing factor family.

It localises to the secreted. The sequence is that of Protein psiC (psiC) from Dictyostelium discoideum (Social amoeba).